The chain runs to 47 residues: uncharacterized protein (47 aa).

The helical transmembrane segment at 28-45 (VMIWGCLPYFLYVLIRMF) threads the bilayer.

Its subcellular location is the cell membrane. This is an uncharacterized protein from Bacillus subtilis (strain 168).